The chain runs to 467 residues: Uronate isomerase (467 aa).

This sequence belongs to the metallo-dependent hydrolases superfamily. Uronate isomerase family.

The catalysed reaction is D-glucuronate = D-fructuronate. The enzyme catalyses aldehydo-D-galacturonate = keto-D-tagaturonate. It functions in the pathway carbohydrate metabolism; pentose and glucuronate interconversion. This chain is Uronate isomerase, found in Actinobacillus succinogenes (strain ATCC 55618 / DSM 22257 / CCUG 43843 / 130Z).